The sequence spans 360 residues: (+)-6a-hydroxymaackiain 3-O-methyltransferase 1 (360 aa).

S-adenosyl-L-methionine is bound by residues 202 to 205, aspartate 226, 226 to 227, 246 to 247, and lysine 260; these read VAGG, DQ, and DM. Residue histidine 264 is the Proton acceptor of the active site.

This sequence belongs to the class I-like SAM-binding methyltransferase superfamily. Cation-independent O-methyltransferase family. COMT subfamily.

It carries out the reaction (+)-6a-hydroxymaackiain + S-adenosyl-L-methionine = (+)-pisatin + S-adenosyl-L-homocysteine + H(+). It catalyses the reaction a 4'-hydroxyisoflavone + S-adenosyl-L-methionine = a 4'-methoxyisoflavone + S-adenosyl-L-homocysteine + H(+). In terms of biological role, methyltransferase involved in the phytoalexin pisatin biosynthesis. Has both 3- and 4'-O-methyltransferase activities. Can use (+)-6a-hydroxymaackiain, 2,7,4'-trihydroxyisoflavanone and with much less activity (+)-medicarpin as substrates, but not (-)-6a-hydroxymaackiain, daidzein, formononetin or isoliquiritigenin. May be involved in formononetin biosynthesis. The protein is (+)-6a-hydroxymaackiain 3-O-methyltransferase 1 (HMM1) of Pisum sativum (Garden pea).